Here is a 118-residue protein sequence, read N- to C-terminus: Small ribosomal subunit protein bS6 (118 aa).

The interval 98–118 (TAAPAAKVAPVETAPAAEAAE) is disordered. A compositionally biased stretch (low complexity) spans 99–118 (AAPAAKVAPVETAPAAEAAE).

The protein belongs to the bacterial ribosomal protein bS6 family.

In terms of biological role, binds together with bS18 to 16S ribosomal RNA. This is Small ribosomal subunit protein bS6 from Geobacter metallireducens (strain ATCC 53774 / DSM 7210 / GS-15).